The following is a 305-amino-acid chain: MPGHNTSRNSSCDPIVTPHLISLYFIVLIGGLVGVISILFLLVKMNTRSVTTMAVINLVVVHSVFLLTVPFRLTYLIKKTWMFGLPFCKFVSAMLHIHMYLTFLFYVVILVTRYLIFFKCKDKVEFYRKLHAVAASAGMWTLVIVIVVPLVVSRYGIHEEYNEEHCFKFHKELAYTYVKIINYMIVIFVIAVAVILLVFQVFIIMLMVQKLRHSLLSHQEFWAQLKNLFFIGVILVCFLPYQFFRIYYLNVVTHSNACNSKVAFYNEIFLSVTAISCYDLLLFVFGGSHWFKQKIIGLWNCVLCR.

The Extracellular segment spans residues 1–22 (MPGHNTSRNSSCDPIVTPHLIS). N-linked (GlcNAc...) asparagine glycans are attached at residues Asn5 and Asn9. Residues 23-43 (LYFIVLIGGLVGVISILFLLV) traverse the membrane as a helical segment. Residues 44 to 50 (KMNTRSV) are Cytoplasmic-facing. A helical transmembrane segment spans residues 51-71 (TTMAVINLVVVHSVFLLTVPF). The Extracellular segment spans residues 72 to 89 (RLTYLIKKTWMFGLPFCK). A helical membrane pass occupies residues 90–110 (FVSAMLHIHMYLTFLFYVVIL). The Cytoplasmic portion of the chain corresponds to 111 to 131 (VTRYLIFFKCKDKVEFYRKLH). The helical transmembrane segment at 132–152 (AVAASAGMWTLVIVIVVPLVV) threads the bilayer. Over 153-183 (SRYGIHEEYNEEHCFKFHKELAYTYVKIINY) the chain is Extracellular. A helical membrane pass occupies residues 184-204 (MIVIFVIAVAVILLVFQVFII). At 205 to 227 (MLMVQKLRHSLLSHQEFWAQLKN) the chain is on the cytoplasmic side. Residues 228 to 248 (LFFIGVILVCFLPYQFFRIYY) traverse the membrane as a helical segment. The Extracellular segment spans residues 249–267 (LNVVTHSNACNSKVAFYNE). The chain crosses the membrane as a helical span at residues 268–288 (IFLSVTAISCYDLLLFVFGGS). At 289–305 (HWFKQKIIGLWNCVLCR) the chain is on the cytoplasmic side.

This sequence belongs to the G-protein coupled receptor 1 family.

The protein resides in the cell membrane. In terms of biological role, orphan receptor. The sequence is that of Probable G-protein coupled receptor 141 (GPR141) from Homo sapiens (Human).